Consider the following 528-residue polypeptide: Calcium-dependent protein kinase 4 (528 aa).

The interval 1 to 36 (MGQEVSSVNNTKNEHHKTNKKSLKGGNERHEMKESS) is disordered. Gly2 carries the N-myristoyl glycine lipid modification. Residues 14 to 23 (EHHKTNKKSL) show a composition bias toward basic residues. Residues 71 to 329 (KGIKILGKGS…RDALEHEWIK (259 aa)) enclose the Protein kinase domain. Residues 76–84 (LGKGSFGEV) and Lys99 contribute to the ATP site. Asp193 serves as the catalytic Proton acceptor. The short motif at 350-358 (NIRQFQSTQ) is the J domain autoinhibitory motif element. A j domain region spans residues 350–386 (NIRQFQSTQKLAQAALLYMGSKLTTIDETKELTKIFK). The short motif at 359–368 (KLAQAALLYM) is the J domain EF-hand interaction motif element. EF-hand domains follow at residues 376 to 411 (DETK…LLKL), 427 to 458 (EVDQ…RKLL), 459 to 494 (LSTE…SDVS), and 496 to 528 (ECWK…LCNY). 20 residues coordinate Ca(2+): Asp389, Asn391, Asp393, Gln395, Glu400, Asp436, Asp438, Asn440, Tyr442, Glu447, Asp472, Asp474, Ser476, Lys478, Glu483, Asp506, Asn508, Asp510, Glu512, and Glu517.

The protein belongs to the protein kinase superfamily. Ser/Thr protein kinase family. CDPK subfamily. In terms of assembly, may interact with the pre-replication MCM complex prior male gametogenesis activation. Requires Mg(2+) as cofactor. Myristoylated; myristoylation may target it to different subcellular compartments. During male gametogenesis, myristoylation is required to initiate DNA replication but not for mitotic spindle assembly or axoneme activation. Post-translationally, not palmitoylated. In terms of processing, may be autophosphorylated on Thr-234 in vitro.

Its subcellular location is the cytoplasm. The protein localises to the cell membrane. It carries out the reaction L-seryl-[protein] + ATP = O-phospho-L-seryl-[protein] + ADP + H(+). The catalysed reaction is L-threonyl-[protein] + ATP = O-phospho-L-threonyl-[protein] + ADP + H(+). With respect to regulation, activated by calcium. Upon calcium binding to the EF-hand domains, the C-terminus of the junction domain (J domain) undergoes a conformational change which results in the dissociation of the pseudo-substrate inhibitory motif from the catalytic domain. This, in turn, may facilitate the autophosphorylation of the activation loop at Thr-234, which leads to the kinase activation. Intracellular calcium increase is triggered by xanthurenic acid (XA), a small mosquito molecule that induces the differentiation of specialized transmission stages, the gametocytes, into male and female gametes. Activated by a decrease in temperature (20 degrees Celsius) and an increase in pH (7.6) occurring when the parasite is ingested by in the mosquito. Calcium-dependent protein kinase which acts as a sensor and effector of intracellular Ca(2+) levels probably in part downstream of cGMP-activated PKG kinase. Plays a central role in the host erythrocytes and hepatocytes infection cycles, sexual reproduction and mosquito transmission of the parasite. During the liver stage, involved in sporozoite motility and thus in sporozoite invasion of host hepatocytes, probably together with CDPK1 and CDPK5. Involved in merosome egress from host hepatocytes, probably together with CDPK5. During the asexual blood stage, involved in merozoite invasion of host erythrocytes and motility by stabilizing the inner membrane complex, a structure below the plasma membrane which acts as an anchor for the glidosome, an acto-myosin motor. Required for cell cycle progression in the male gametocyte. During male gametogenesis in the mosquito gut, required to initiate the first round of DNA replication, probably by facilitating the assembly of the pre-replicative MCM complex, to assemble the first mitotic spindle and, at the end of gametogenesis, to initiate axoneme motility, cytokinesis and subsequent exflagellation. For each of these steps, may phosphorylate SOC1, SOC2 and SOC3, respectively. Together with CDPK1, regulates ookinete gliding in the mosquito host midgut. The chain is Calcium-dependent protein kinase 4 from Plasmodium falciparum (isolate 3D7).